The chain runs to 308 residues: tRNA pseudouridine synthase B (308 aa).

Asp-45 serves as the catalytic Nucleophile.

Belongs to the pseudouridine synthase TruB family. Type 1 subfamily.

It carries out the reaction uridine(55) in tRNA = pseudouridine(55) in tRNA. Its function is as follows. Responsible for synthesis of pseudouridine from uracil-55 in the psi GC loop of transfer RNAs. The chain is tRNA pseudouridine synthase B from Gloeothece citriformis (strain PCC 7424) (Cyanothece sp. (strain PCC 7424)).